A 325-amino-acid chain; its full sequence is ATP-dependent (S)-NAD(P)H-hydrate dehydratase (325 aa).

Positions 9–315 (LLKKVYNMVP…EHVHTAFLNV (307 aa)) constitute a YjeF C-terminal domain. Residues Gly-119 and 172–178 (NVVEFGR) each bind (6S)-NADPHX. ATP contacts are provided by residues 211 to 215 (KGAKD) and 230 to 239 (GGLKRSGGQG). Asp-240 lines the (6S)-NADPHX pocket.

It belongs to the NnrD/CARKD family. It depends on Mg(2+) as a cofactor.

The protein localises to the cytoplasm. It carries out the reaction (6S)-NADHX + ATP = ADP + phosphate + NADH + H(+). It catalyses the reaction (6S)-NADPHX + ATP = ADP + phosphate + NADPH + H(+). Its function is as follows. Catalyzes the dehydration of the S-form of NAD(P)HX at the expense of ATP, which is converted to ADP. Together with NAD(P)HX epimerase, which catalyzes the epimerization of the S- and R-forms, the enzyme allows the repair of both epimers of NAD(P)HX, a damaged form of NAD(P)H that is a result of enzymatic or heat-dependent hydration. The sequence is that of ATP-dependent (S)-NAD(P)H-hydrate dehydratase from Phaeosphaeria nodorum (strain SN15 / ATCC MYA-4574 / FGSC 10173) (Glume blotch fungus).